The sequence spans 331 residues: Benzylsuccinate synthase activating enzyme (331 aa).

A Radical SAM core domain is found at 15-315 (QDGPGIRTTI…VTIGGIVGIA (301 aa)). Residues C29, C33, C36, C55, C58, C61, C65, C89, C92, C95, and C99 each contribute to the [4Fe-4S] cluster site. 35-37 (WCH) lines the S-adenosyl-L-methionine pocket. 2 4Fe-4S ferredoxin-type domains span residues 46–75 (QEFYFYPDRCVGCGRCVAVCPAETSRLVRN) and 80–109 (TIVQIDRTNCQRCMRCVAACLTEARAIVGQ). S-adenosyl-L-methionine is bound by residues G139, 189-191 (DLK), and H263.

This sequence belongs to the organic radical-activating enzymes family. Requires [4Fe-4S] cluster as cofactor.

It carries out the reaction glycyl-[protein] + reduced [flavodoxin] + S-adenosyl-L-methionine = glycin-2-yl radical-[protein] + semiquinone [flavodoxin] + 5'-deoxyadenosine + L-methionine + H(+). Its pathway is xenobiotic degradation; toluene degradation [regulation]. Functionally, activation of benzylsuccinate synthase under anaerobic conditions by generation of an organic free radical, using S-adenosylmethionine and reduced flavodoxin as cosubstrates to produce 5'-deoxy-adenosine. The sequence is that of Benzylsuccinate synthase activating enzyme (bssD) from Thauera aromatica.